A 343-amino-acid polypeptide reads, in one-letter code: MGETVTIQKNWQELIRPNKLQVTPGSDATRFATVVAEPLERGFGQTLGNALRRILLSSLQGAAVQSVHIDGVLHEFSSIAGVREDVTDIVLNIKDISIKMQGEGPKRMVVKKQGPGAVTAGDIQTVGDIVVLNPDLQLCTLDEGAEIRMEFTVATGKGYVPAERNRPEDAPIGLIPIDSLFSPVRKVSYKVENTREGQILDYDKLTMTIETNGAISPEDAVAYAARILQDQLNVFVNFEEPRKEVAQEIIPDLAFNPAFLKKVDELELSVRSANCLKNDNIVYIGDLVQKSEAEMLRTPNFGRKSLNEIKEVLAQMGLHLGMEVPGWPPENIDELAKRFEDHY.

Residues 1–239 (MGETVTIQKN…DQLNVFVNFE (239 aa)) are alpha N-terminal domain (alpha-NTD). Residues 255 to 343 (FNPAFLKKVD…ELAKRFEDHY (89 aa)) form an alpha C-terminal domain (alpha-CTD) region.

This sequence belongs to the RNA polymerase alpha chain family. Homodimer. The RNAP catalytic core consists of 2 alpha, 1 beta, 1 beta' and 1 omega subunit. When a sigma factor is associated with the core the holoenzyme is formed, which can initiate transcription.

It carries out the reaction RNA(n) + a ribonucleoside 5'-triphosphate = RNA(n+1) + diphosphate. In terms of biological role, DNA-dependent RNA polymerase catalyzes the transcription of DNA into RNA using the four ribonucleoside triphosphates as substrates. The polypeptide is DNA-directed RNA polymerase subunit alpha (Bradyrhizobium sp. (strain BTAi1 / ATCC BAA-1182)).